The primary structure comprises 356 residues: Retinoic acid-induced protein 3 (356 aa).

The Extracellular segment spans residues 1–35; that stretch reads MTTPTTAPSGCRSDLDSRYHRLCDLAEGWGIALET. Residues 36 to 56 traverse the membrane as a helical segment; sequence LAAVGAVATVACMFALVFLIC. Over 57 to 68 the chain is Cytoplasmic; that stretch reads KVQDSNKRKMLP. Residues 69–89 form a helical membrane-spanning segment; sequence AQFLFLLGVLGVFGLTFAFII. Over 90 to 101 the chain is Extracellular; the sequence is KLDGATGPTRFF. The helical transmembrane segment at 102–122 threads the bilayer; the sequence is LFGVLFAICFSCLLAHAFNLI. The Cytoplasmic portion of the chain corresponds to 123–131; the sequence is KLVRGRKPL. A helical membrane pass occupies residues 132–152; it reads SWLVILSLAVGFSLVQDVIAI. Residues 153-178 lie on the Extracellular side of the membrane; the sequence is EYLVLTMNRTNVNVFSELPAPRRNED. Asn160 carries N-linked (GlcNAc...) asparagine glycosylation. The chain crosses the membrane as a helical span at residues 179–199; it reads FVMLLIYVLVLMVLTFFTSFL. Residues 200-214 are Cytoplasmic-facing; that stretch reads VFCGSFSGWKRHGFH. Residues 215–235 traverse the membrane as a helical segment; sequence ICFTSFLSIAIWVAWIVLLLI. The Extracellular portion of the chain corresponds to 236–244; the sequence is PDIDRKWDD. The helical transmembrane segment at 245-265 threads the bilayer; the sequence is TILSTALVANGWVFLAFYILP. At 266 to 356 the chain is on the cytoplasmic side; it reads EFRQLPRQRS…NDYEGRKGDS (91 aa). The residue at position 303 (Ser303) is a Phosphoserine. Residues Tyr318 and Tyr321 each carry the phosphotyrosine modification. A disordered region spans residues 336–356; sequence IPRAQAPASPYNDYEGRKGDS. The residue at position 344 (Ser344) is a Phosphoserine. Tyr346 and Tyr349 each carry phosphotyrosine.

The protein belongs to the G-protein coupled receptor 3 family. In terms of assembly, interacts (via its transmembrane domain) with EGFR. Phosphorylated in two conserved double-tyrosine motifs, Tyr 318/Tyr-321 and Tyr-346/Tyr-349 by EGFR. Tyr-318 and Tyr-321 are the preferred residues responsible for EGFR-mediated GPRC5A phosphorylation. Expressed predominantly in normal fetal and adult lung. Almost undetectable or expressed at very low levels in other tissues.

It localises to the cell membrane. Functionally, orphan receptor. Could be involved in modulating differentiation and maintaining homeostasis of epithelial cells. This retinoic acid-inducible GPCR provides evidence for a possible interaction between retinoid and G-protein signaling pathways. Functions as a negative modulator of EGFR signaling. Acts as a lung tumor suppressor. This chain is Retinoic acid-induced protein 3 (Gprc5a), found in Mus musculus (Mouse).